A 285-amino-acid chain; its full sequence is Meiotically up-regulated gene 74 protein (285 aa).

It localises to the cytoplasm. Its function is as follows. Has a role in meiosis. This is Meiotically up-regulated gene 74 protein (mug74) from Schizosaccharomyces pombe (strain 972 / ATCC 24843) (Fission yeast).